A 3120-amino-acid chain; its full sequence is DNA-directed RNA polymerase subunit beta'' (3120 aa).

4 residues coordinate Zn(2+): Cys323, Cys396, Cys403, and Cys406. The tract at residues 595–1130 is insert-1; sequence FIGEGKQNVL…LKTLVLKKWF (536 aa). Residues 1796–2346 are insert-2; the sequence is KGHLVAYARP…NGIIQAKSLL (551 aa). Residues 2422 to 2610 form an insert-3 region; it reads NSNFLENTHF…PEGEGEKDMT (189 aa). The tract at residues 2726 to 2801 is insert-4; sequence FSKKRWKKSI…KQNQTIILAL (76 aa). Positions 2856–2996 are insert-5; sequence ASKMSEYMFS…LNQLLSNNLD (141 aa). Residues 2926-2956 are disordered; the sequence is EGIDSSKIPSSNIPEGKVTQNNKRKSTRKNV. A compositionally biased stretch (polar residues) spans 2932 to 2946; sequence KIPSSNIPEGKVTQN.

Belongs to the RNA polymerase beta' chain family. RpoC2 subfamily. As to quaternary structure, in plastids the minimal PEP RNA polymerase catalytic core is composed of four subunits: alpha, beta, beta', and beta''. When a (nuclear-encoded) sigma factor is associated with the core the holoenzyme is formed, which can initiate transcription. Requires Zn(2+) as cofactor.

The protein localises to the plastid. Its subcellular location is the chloroplast. It catalyses the reaction RNA(n) + a ribonucleoside 5'-triphosphate = RNA(n+1) + diphosphate. Functionally, DNA-dependent RNA polymerase catalyzes the transcription of DNA into RNA using the four ribonucleoside triphosphates as substrates. This Chlamydomonas reinhardtii (Chlamydomonas smithii) protein is DNA-directed RNA polymerase subunit beta''.